The primary structure comprises 262 residues: Hydroxyethylthiazole kinase (262 aa).

Residue M40 coordinates substrate. ATP is bound by residues K116 and T162. G189 lines the substrate pocket.

It belongs to the Thz kinase family. Requires Mg(2+) as cofactor.

The catalysed reaction is 5-(2-hydroxyethyl)-4-methylthiazole + ATP = 4-methyl-5-(2-phosphooxyethyl)-thiazole + ADP + H(+). It participates in cofactor biosynthesis; thiamine diphosphate biosynthesis; 4-methyl-5-(2-phosphoethyl)-thiazole from 5-(2-hydroxyethyl)-4-methylthiazole: step 1/1. In terms of biological role, catalyzes the phosphorylation of the hydroxyl group of 4-methyl-5-beta-hydroxyethylthiazole (THZ). The protein is Hydroxyethylthiazole kinase of Clostridioides difficile (strain 630) (Peptoclostridium difficile).